Here is a 310-residue protein sequence, read N- to C-terminus: Thioredoxin reductase (310 aa).

Residue 34 to 41 coordinates FAD; sequence NGMQPGGQ. C135 and C138 are oxidised to a cystine. 281–290 lines the FAD pocket; that stretch reads DVQDKIYRQA.

Belongs to the class-II pyridine nucleotide-disulfide oxidoreductase family. In terms of assembly, homodimer. It depends on FAD as a cofactor.

The protein localises to the cytoplasm. It carries out the reaction [thioredoxin]-dithiol + NADP(+) = [thioredoxin]-disulfide + NADPH + H(+). This is Thioredoxin reductase (trxB) from Rickettsia typhi (strain ATCC VR-144 / Wilmington).